Reading from the N-terminus, the 328-residue chain is uncharacterized protein (328 aa).

The N-terminal stretch at 1–32 is a signal peptide; sequence MFNFRLFSRRGKSLGLLAIVLLLFGFYSLKSS.

This sequence belongs to the glycosyltransferase 34 family.

Its subcellular location is the endoplasmic reticulum. This is an uncharacterized protein from Schizosaccharomyces pombe (strain 972 / ATCC 24843) (Fission yeast).